The sequence spans 186 residues: Peptidoglycan-recognition protein SD (186 aa).

Positions 1–18 are cleaved as a signal peptide; the sequence is MTWIGLLIVGLTAIAVQG. Positions 47-169 constitute an N-acetylmuramoyl-L-alanine amidase domain; that stretch reads AVIAHTAGGA…RQVSATMSPG (123 aa). Cys-57 and Cys-63 are joined by a disulfide. N-linked (GlcNAc...) asparagine glycosylation occurs at Asn-181.

This sequence belongs to the N-acetylmuramoyl-L-alanine amidase 2 family.

It localises to the secreted. Functionally, peptidoglycan-recognition protein that plays a key role in innate immunity by binding to peptidoglycans (PGN) of Gram-positive bacteria and activating the Toll pathway. Has no activity against on Gram-negative bacteria and fungi. Shows some partial redundancy with PRPGP-SA in Gram-positive bacteria recognition. May act by activating the proteolytic cleavage of Spatzle and the subsequent activation of Toll pathway. Recognizes S.aureus PGN. This Drosophila simulans (Fruit fly) protein is Peptidoglycan-recognition protein SD (PGRP-SD).